The chain runs to 619 residues: Dihydroxy-acid dehydratase (619 aa).

Asp-81 is a Mg(2+) binding site. Residue Cys-122 coordinates [2Fe-2S] cluster. Mg(2+) contacts are provided by Asp-123 and Lys-124. Lys-124 carries the post-translational modification N6-carboxylysine. Residue Cys-195 participates in [2Fe-2S] cluster binding. Glu-494 is a Mg(2+) binding site. The active-site Proton acceptor is the Ser-520.

It belongs to the IlvD/Edd family. Homodimer. [2Fe-2S] cluster is required as a cofactor. Mg(2+) serves as cofactor.

It carries out the reaction (2R)-2,3-dihydroxy-3-methylbutanoate = 3-methyl-2-oxobutanoate + H2O. The catalysed reaction is (2R,3R)-2,3-dihydroxy-3-methylpentanoate = (S)-3-methyl-2-oxopentanoate + H2O. The protein operates within amino-acid biosynthesis; L-isoleucine biosynthesis; L-isoleucine from 2-oxobutanoate: step 3/4. It functions in the pathway amino-acid biosynthesis; L-valine biosynthesis; L-valine from pyruvate: step 3/4. In terms of biological role, functions in the biosynthesis of branched-chain amino acids. Catalyzes the dehydration of (2R,3R)-2,3-dihydroxy-3-methylpentanoate (2,3-dihydroxy-3-methylvalerate) into 2-oxo-3-methylpentanoate (2-oxo-3-methylvalerate) and of (2R)-2,3-dihydroxy-3-methylbutanoate (2,3-dihydroxyisovalerate) into 2-oxo-3-methylbutanoate (2-oxoisovalerate), the penultimate precursor to L-isoleucine and L-valine, respectively. In Shewanella sp. (strain MR-7), this protein is Dihydroxy-acid dehydratase.